The primary structure comprises 231 residues: Pathogenesis-related thaumatin-like protein 3.7 (231 aa).

A signal peptide spans 1-27; it reads MATVSDLALLLVAGLVAISLHMQEAGA. Intrachain disulfides connect Cys36–Cys230, Cys77–Cys87, Cys92–Cys98, Cys143–Cys218, Cys148–Cys201, Cys156–Cys166, Cys170–Cys179, and Cys180–Cys188.

Belongs to the thaumatin family.

Functionally, may be involved in disease resistance. This Cryptomeria japonica (Japanese cedar) protein is Pathogenesis-related thaumatin-like protein 3.7.